Here is a 212-residue protein sequence, read N- to C-terminus: Deoxyribose-phosphate aldolase (212 aa).

Catalysis depends on aspartate 89, which acts as the Proton donor/acceptor. Catalysis depends on lysine 151, which acts as the Schiff-base intermediate with acetaldehyde. Lysine 180 acts as the Proton donor/acceptor in catalysis.

Belongs to the DeoC/FbaB aldolase family. DeoC type 1 subfamily.

The protein localises to the cytoplasm. The enzyme catalyses 2-deoxy-D-ribose 5-phosphate = D-glyceraldehyde 3-phosphate + acetaldehyde. Its pathway is carbohydrate degradation; 2-deoxy-D-ribose 1-phosphate degradation; D-glyceraldehyde 3-phosphate and acetaldehyde from 2-deoxy-alpha-D-ribose 1-phosphate: step 2/2. In terms of biological role, catalyzes a reversible aldol reaction between acetaldehyde and D-glyceraldehyde 3-phosphate to generate 2-deoxy-D-ribose 5-phosphate. This Clostridium botulinum (strain 657 / Type Ba4) protein is Deoxyribose-phosphate aldolase.